Here is a 206-residue protein sequence, read N- to C-terminus: Large ribosomal subunit protein uL4 (206 aa).

It belongs to the universal ribosomal protein uL4 family. In terms of assembly, part of the 50S ribosomal subunit.

One of the primary rRNA binding proteins, this protein initially binds near the 5'-end of the 23S rRNA. It is important during the early stages of 50S assembly. It makes multiple contacts with different domains of the 23S rRNA in the assembled 50S subunit and ribosome. In terms of biological role, forms part of the polypeptide exit tunnel. The polypeptide is Large ribosomal subunit protein uL4 (Methylorubrum extorquens (strain CM4 / NCIMB 13688) (Methylobacterium extorquens)).